The following is a 105-amino-acid chain: NADH-quinone oxidoreductase subunit K (105 aa).

3 consecutive transmembrane segments (helical) span residues 8–28 (VTNG…GIII), 33–53 (ILIL…NFLI), and 65–85 (VFVF…LAIV).

This sequence belongs to the complex I subunit 4L family. As to quaternary structure, NDH-1 is composed of 14 different subunits. Subunits NuoA, H, J, K, L, M, N constitute the membrane sector of the complex.

It is found in the cell inner membrane. It carries out the reaction a quinone + NADH + 5 H(+)(in) = a quinol + NAD(+) + 4 H(+)(out). In terms of biological role, NDH-1 shuttles electrons from NADH, via FMN and iron-sulfur (Fe-S) centers, to quinones in the respiratory chain. The immediate electron acceptor for the enzyme in this species is believed to be ubiquinone. Couples the redox reaction to proton translocation (for every two electrons transferred, four hydrogen ions are translocated across the cytoplasmic membrane), and thus conserves the redox energy in a proton gradient. In Francisella philomiragia subsp. philomiragia (strain ATCC 25017 / CCUG 19701 / FSC 153 / O#319-036), this protein is NADH-quinone oxidoreductase subunit K.